Here is a 2684-residue protein sequence, read N- to C-terminus: Probable polyketide synthase 27 (2684 aa).

The Ketosynthase family 3 (KS3) domain maps to 11–442; it reads CGDVAIIGIG…GSNVCLILSE (432 aa). Residues Cys183, His322, and His365 each act as for beta-ketoacyl synthase activity in the active site. Positions 650–683 are acyl/malonyl transferases; it reads GVSADIIVGHSLGEMSSSYSSGMIDFETLCYLIY. Ser660 functions as the For acyl/malonyl transferase activity in the catalytic mechanism. The N-terminal hotdog fold stretch occupies residues 958 to 1087; sequence HEKITSEGPP…GNFSLFKHNS (130 aa). A PKS/mFAS DH domain is found at 958-1276; that stretch reads HEKITSEGPP…CTSVSLVNPR (319 aa). The active-site Proton acceptor; for dehydratase activity is His999. The tract at residues 1104-1276 is C-terminal hotdog fold; the sequence is NFTTISKQEF…CTSVSLVNPR (173 aa). Catalysis depends on Asp1173, which acts as the Proton donor; for dehydratase activity. The segment at 1202-1221 is disordered; that stretch reads IPSSSSSSKDDNDCDSNNNN. One can recognise a Carrier domain in the interval 2585–2662; the sequence is SDNEFIHSTI…QSIDIIKFGY (78 aa). Ser2622 carries the post-translational modification O-(pantetheine 4'-phosphoryl)serine.

Pantetheine 4'-phosphate serves as cofactor.

Functionally, probable polyketide synthase. The chain is Probable polyketide synthase 27 (pks27) from Dictyostelium discoideum (Social amoeba).